Consider the following 478-residue polypeptide: Signal recognition particle receptor FtsY (478 aa).

Basic and acidic residues-rich tracts occupy residues 14 to 33 (KDKA…ERGN) and 45 to 56 (AEAHDAVDKDPV). The interval 14 to 94 (KDKAETEERP…DAPLLPGAEL (81 aa)) is disordered. Over residues 71–86 (EAVDVAPAEDDEEEDA) the composition is skewed to acidic residues. GTP contacts are provided by residues 283–290 (GVNGTGKT), 365–369 (DTAGR), and 429–432 (TKLD).

It belongs to the GTP-binding SRP family. FtsY subfamily. Part of the signal recognition particle protein translocation system, which is composed of SRP and FtsY. SRP is a ribonucleoprotein composed of Ffh and a 4.5S RNA molecule.

It is found in the cell inner membrane. Its subcellular location is the cytoplasm. It carries out the reaction GTP + H2O = GDP + phosphate + H(+). In terms of biological role, involved in targeting and insertion of nascent membrane proteins into the cytoplasmic membrane. Acts as a receptor for the complex formed by the signal recognition particle (SRP) and the ribosome-nascent chain (RNC). Interaction with SRP-RNC leads to the transfer of the RNC complex to the Sec translocase for insertion into the membrane, the hydrolysis of GTP by both Ffh and FtsY, and the dissociation of the SRP-FtsY complex into the individual components. This is Signal recognition particle receptor FtsY from Agrobacterium fabrum (strain C58 / ATCC 33970) (Agrobacterium tumefaciens (strain C58)).